Here is a 106-residue protein sequence, read N- to C-terminus: Transcription factor TRY (106 aa).

The region spanning 34–71 (TEQEEDLIFRMYRLVGDRWDLIAGRVPGRQPEEIERYW) is the Myb-like domain. Positions 83 to 106 (RRQLHSSSHKHTKPHRPRFSIYPS) are disordered. Basic residues predominate over residues 84–100 (RQLHSSSHKHTKPHRPR).

In terms of assembly, interacts with GL3 and thus prevents GL1 GL3 interaction. Also interacts with BHLH2. Expressed in roots, leaves, siliques and inflorescences.

Its subcellular location is the nucleus. Functionally, transcription factor. Involved in epidermal cell fate specification. Negative regulator of trichome development, including endoreplication, by lateral inhibition involving intercellular interactions. Promotes the formation of hair developing cells (trichoblasts) in H position in root epidermis, probably by inhibiting non-hair cell (atrichoblasts) formation. The polypeptide is Transcription factor TRY (TRY) (Arabidopsis thaliana (Mouse-ear cress)).